The following is a 187-amino-acid chain: Crossover junction endodeoxyribonuclease RuvC (187 aa).

Active-site residues include D7, E67, and D140. 3 residues coordinate Mg(2+): D7, E67, and D140.

This sequence belongs to the RuvC family. As to quaternary structure, homodimer which binds Holliday junction (HJ) DNA. The HJ becomes 2-fold symmetrical on binding to RuvC with unstacked arms; it has a different conformation from HJ DNA in complex with RuvA. In the full resolvosome a probable DNA-RuvA(4)-RuvB(12)-RuvC(2) complex forms which resolves the HJ. The cofactor is Mg(2+).

It localises to the cytoplasm. It carries out the reaction Endonucleolytic cleavage at a junction such as a reciprocal single-stranded crossover between two homologous DNA duplexes (Holliday junction).. Functionally, the RuvA-RuvB-RuvC complex processes Holliday junction (HJ) DNA during genetic recombination and DNA repair. Endonuclease that resolves HJ intermediates. Cleaves cruciform DNA by making single-stranded nicks across the HJ at symmetrical positions within the homologous arms, yielding a 5'-phosphate and a 3'-hydroxyl group; requires a central core of homology in the junction. The consensus cleavage sequence is 5'-(A/T)TT(C/G)-3'. Cleavage occurs on the 3'-side of the TT dinucleotide at the point of strand exchange. HJ branch migration catalyzed by RuvA-RuvB allows RuvC to scan DNA until it finds its consensus sequence, where it cleaves and resolves the cruciform DNA. The sequence is that of Crossover junction endodeoxyribonuclease RuvC from Chlorobium phaeobacteroides (strain DSM 266 / SMG 266 / 2430).